We begin with the raw amino-acid sequence, 248 residues long: Probable N-acetylglucosaminyl-phosphatidylinositol de-N-acetylase (248 aa).

Topologically, residues 1 to 7 (MIWFWST) are lumenal. The chain crosses the membrane as a helical span at residues 8 to 24 (LLVTAIAVLSTANESSS). Over 25–248 (GQEKLAVESI…MSNNVLKRAT (224 aa)) the chain is Cytoplasmic.

Belongs to the PIGL family.

It localises to the endoplasmic reticulum membrane. It catalyses the reaction a 6-(N-acetyl-alpha-D-glucosaminyl)-1-(1,2-diacyl-sn-glycero-3-phospho)-1D-myo-inositol + H2O = a 6-(alpha-D-glucosaminyl)-1-(1,2-diacyl-sn-glycero-3-phospho)-1D-myo-inositol + acetate. The protein operates within glycolipid biosynthesis; glycosylphosphatidylinositol-anchor biosynthesis. Functionally, involved in the second step of GPI biosynthesis. De-N-acetylation of N-acetylglucosaminyl-phosphatidylinositol. The sequence is that of Probable N-acetylglucosaminyl-phosphatidylinositol de-N-acetylase (gpi12) from Schizosaccharomyces pombe (strain 972 / ATCC 24843) (Fission yeast).